The sequence spans 313 residues: 3-ketodihydrosphingosine reductase TSC10 (313 aa).

Leucine 12 lines the NADP(+) pocket. Positions 15, 17, and 19 each coordinate NADPH. Positions 15–19 (GGSQG) match the GXSXG motif. Leucine 20 contacts NADP(+). 3 residues coordinate NADPH: arginine 47, lysine 51, and aspartate 86. Aspartate 86 contacts NADP(+). The Proton donor role is filled by serine 160. Positions 174, 178, and 207 each coordinate NADP(+). Tyrosine 174 acts as the Proton acceptor in catalysis. The Lowers pKa of active site Tyr role is filled by lysine 178. A helical membrane pass occupies residues 278–298 (VFSWILGALLNITIVPIYMLI).

This sequence belongs to the short-chain dehydrogenases/reductases (SDR) family.

It localises to the endoplasmic reticulum membrane. The catalysed reaction is sphinganine + NADP(+) = 3-oxosphinganine + NADPH + H(+). Its pathway is lipid metabolism; sphingolipid metabolism. In terms of biological role, catalyzes the reduction of 3'-oxosphinganine (3-ketodihydrosphingosine/KDS) to sphinganine (dihydrosphingosine/DHS), the second step of de novo sphingolipid biosynthesis. The protein is 3-ketodihydrosphingosine reductase TSC10 (TSC10) of Kluyveromyces lactis (strain ATCC 8585 / CBS 2359 / DSM 70799 / NBRC 1267 / NRRL Y-1140 / WM37) (Yeast).